The primary structure comprises 727 residues: MRRSSPEKKPEAEWEADAAAAAAATAAATESLPAETEKQQGVDAGAAGDPERLELEEQPKDVGRIPTPTRRHAPEEGEARVVRRLPPALPLAQPRPAARALSQLVKARGRSRSRVYRRSAGSMRPVTVDSSKARTSLDALKISLRQLRWKEFPFGRRLPCDIYWHGVSFRDSDILSGQVNKFPGMTEMVRKVTLSRALRIMQNLFPEEYNFYPRSWILPEEFQLFVSQVQTVKEGDPSWKPTFIVKPDSGCQGDGIYLIKDPCDGRLTGTLHNRPAVVQEYIRKPLLIDKLKFDIRLYVLLKSLDPLEIYIAKDGLSRFCTEPYQEPNPQNLHHVFMHLTNYSLNIHSGKFVHSDSASTGSKRTFSSILCRLSSKGVDIKKVWSDIISLVIKTVIALTPELKVFYQSDIPTGRPGPTCFQILGFDILLMKNLKPMLLEVNANPSMRIEHEYELSPGVFENIPSLVDEEVKVAVIRDTLRLMDPLKKKKEIHFPDIYMDRKHRIPPVSDRMSSWKHKGSSLSIVRSQQMEKSFTSKEDLNCDPTGGDSEPNPEAHLPSICLKQVFPKYAKQFNYLRLVDRMANLFIRFLGIKGTMKLGPTGFRTFIRNCKLSSSSLSMAAVDILYIDITRRWNSVTVDQRDSGMCLQAFVEAFFFLAQRKFKLQPLHEQVASLIDLCEYHLSVLDEKRLLCHRGRPLQRNPPQMNRPEHSATGSSAPRVIGASKLSQS.

The span at 1-12 (MRRSSPEKKPEA) shows a compositional bias: basic and acidic residues. The segment at 1–88 (MRRSSPEKKP…ARVVRRLPPA (88 aa)) is disordered. The segment covering 17-34 (DAAAAAAATAAATESLPA) has biased composition (low complexity). Basic and acidic residues-rich tracts occupy residues 49–63 (DPER…KDVG) and 72–81 (HAPEEGEARV). The region spanning 125–477 (PVTVDSSKAR…EVKVAVIRDT (353 aa)) is the TTL domain. Residues Lys-246, 252–253 (QG), 279–282 (QEYI), and 292–294 (KFD) contribute to the ATP site. Gln-252 serves as a coordination point for a protein. Arg-318 serves as a coordination point for L-glutamate. 340-341 (TN) contacts ATP. 3 residues coordinate L-glutamate: Tyr-342, Ser-343, and Lys-362. Asp-425, Glu-438, and Asn-440 together coordinate Mg(2+). Positions 464–566 (LVDEEVKVAV…SICLKQVFPK (103 aa)) are c-MTBD region. Lys-470 serves as a coordination point for L-glutamate. Disordered stretches follow at residues 530–551 (KSFT…EPNP) and 694–727 (RPLQ…LSQS).

It belongs to the tubulin--tyrosine ligase family. Mg(2+) is required as a cofactor. As to expression, highly expressed in brain, kidney, liver, lung, muscle and testis. Expressed in heart, spleen and trachea. In the brain, expressed in ependymal cilia, cortex, corpus callosum and striatum.

Its subcellular location is the cytoplasm. The protein resides in the cytoskeleton. The protein localises to the cilium basal body. It carries out the reaction L-glutamyl-[protein] + L-glutamate + ATP = gamma-L-glutamyl-L-glutamyl-[protein] + ADP + phosphate + H(+). The enzyme catalyses (L-glutamyl)(n)-gamma-L-glutamyl-L-glutamyl-[protein] + L-glutamate + ATP = (L-glutamyl)(n+1)-gamma-L-glutamyl-L-glutamyl-[protein] + ADP + phosphate + H(+). Polyglutamylase which modifies tubulin, generating polyglutamate side chains of variable lengths on the gamma-carboxyl group of specific glutamate residues within the C-terminal tail of tubulin. Preferentially mediates ATP-dependent polyglutamate long side-chain elongation over the initiation step of the polyglutamylation reaction. Preferentially modifies the alpha-tubulin tail over a beta-tail. Required for CCSAP localization to both spindle and cilia microtubules. Promotes tubulin polyglutamylation which stimulates spastin/SPAST-mediated microtubule severing, thereby regulating microtubule functions. This is Tubulin polyglutamylase TTLL11 from Mus musculus (Mouse).